The primary structure comprises 507 residues: Transcription factor CP2 (507 aa).

The 240-residue stretch at 61 to 300 (ENKILPFQYV…SPGFNSSHNS (240 aa)) folds into the Grh/CP2 DB domain. The tract at residues 133-395 (EHQQLEGWRW…LFNALKGRMV (263 aa)) is DNA-binding. 2 disordered regions span residues 240–268 (PKGA…YQPS) and 296–316 (SSHN…QPEP). Basic and acidic residues predominate over residues 241–265 (KGADRKQKTDREKMEKRTPQEKEKY).

Belongs to the grh/CP2 family. CP2 subfamily. Component of the SSP (stage selector protein) complex, which appears to be a heteromer of TFCP2 and 2 copies of NFE4.

It is found in the nucleus. Its function is as follows. May function as a transcription factor. The polypeptide is Transcription factor CP2 (tfcp2) (Xenopus tropicalis (Western clawed frog)).